We begin with the raw amino-acid sequence, 90 residues long: Acylphosphatase (90 aa).

The region spanning 4–90 (TRRVRFYGRV…TEFQDFQIKR (87 aa)) is the Acylphosphatase-like domain. Residues arginine 19 and asparagine 37 contribute to the active site.

This sequence belongs to the acylphosphatase family.

It catalyses the reaction an acyl phosphate + H2O = a carboxylate + phosphate + H(+). This chain is Acylphosphatase (acyP), found in Thermoplasma volcanium (strain ATCC 51530 / DSM 4299 / JCM 9571 / NBRC 15438 / GSS1).